A 294-amino-acid polypeptide reads, in one-letter code: Nucleotide-binding protein Tfu_2020 (294 aa).

ATP is bound at residue Gly18 to Ser25. Asp69 to Ser72 is a binding site for GTP.

Belongs to the RapZ-like family.

Displays ATPase and GTPase activities. This is Nucleotide-binding protein Tfu_2020 from Thermobifida fusca (strain YX).